Consider the following 230-residue polypeptide: 2-phytyl-1,4-naphtoquinone methyltransferase (230 aa).

It belongs to the class I-like SAM-binding methyltransferase superfamily. MenG/UbiE family.

It carries out the reaction demethylphylloquinol + S-adenosyl-L-methionine = phylloquinol + S-adenosyl-L-homocysteine + H(+). The protein operates within cofactor biosynthesis; phylloquinone biosynthesis. Methyltransferase required for the conversion of 2-phytyl-1,4-beta-naphthoquinol to phylloquinol. The sequence is that of 2-phytyl-1,4-naphtoquinone methyltransferase from Nostoc punctiforme (strain ATCC 29133 / PCC 73102).